A 391-amino-acid chain; its full sequence is GTPase Obg (391 aa).

An Obg domain is found at 1-159 (MKFIDEALIR…RDLLLELMLL (159 aa)). Residues 160–333 (ADVGMLGLPN…LTRDIMDFIE (174 aa)) enclose the OBG-type G domain. Residues 166-173 (GLPNAGKS), 191-195 (FTTLV), 213-216 (DIPG), 283-286 (NKID), and 314-316 (SAA) contribute to the GTP site. Positions 173 and 193 each coordinate Mg(2+).

This sequence belongs to the TRAFAC class OBG-HflX-like GTPase superfamily. OBG GTPase family. Monomer. The cofactor is Mg(2+).

It is found in the cytoplasm. Its function is as follows. An essential GTPase which binds GTP, GDP and possibly (p)ppGpp with moderate affinity, with high nucleotide exchange rates and a fairly low GTP hydrolysis rate. Plays a role in control of the cell cycle, stress response, ribosome biogenesis and in those bacteria that undergo differentiation, in morphogenesis control. The polypeptide is GTPase Obg (Actinobacillus pleuropneumoniae serotype 7 (strain AP76)).